The chain runs to 257 residues: 5'-nucleotidase SurE (257 aa).

4 residues coordinate a divalent metal cation: D8, D9, S40, and N97.

The protein belongs to the SurE nucleotidase family. A divalent metal cation serves as cofactor.

The protein localises to the cytoplasm. It catalyses the reaction a ribonucleoside 5'-phosphate + H2O = a ribonucleoside + phosphate. In terms of biological role, nucleotidase that shows phosphatase activity on nucleoside 5'-monophosphates. This chain is 5'-nucleotidase SurE, found in Desulforudis audaxviator (strain MP104C).